The chain runs to 265 residues: NAD kinase 1 (265 aa).

Aspartate 45 serves as the catalytic Proton acceptor. NAD(+) is bound by residues 45–46 (DG), 122–123 (NE), arginine 148, aspartate 150, and alanine 185.

It belongs to the NAD kinase family. It depends on a divalent metal cation as a cofactor.

The protein localises to the cytoplasm. The catalysed reaction is NAD(+) + ATP = ADP + NADP(+) + H(+). Functionally, involved in the regulation of the intracellular balance of NAD and NADP, and is a key enzyme in the biosynthesis of NADP. Catalyzes specifically the phosphorylation on 2'-hydroxyl of the adenosine moiety of NAD to yield NADP. The sequence is that of NAD kinase 1 from Bacillus cereus (strain ATCC 10987 / NRS 248).